We begin with the raw amino-acid sequence, 286 residues long: UPF0761 membrane protein KPK_5501 (286 aa).

7 helical membrane-spanning segments follow: residues 44 to 64 (LLSL…FPMF), 74 to 94 (FIFA…IEQF), 104 to 124 (VGAF…DSAL), 140 to 160 (FAVY…SLAI), 183 to 203 (LFPL…VPTT), 210 to 230 (AVIG…AFAL), and 244 to 264 (VISV…IVLL).

Belongs to the UPF0761 family.

The protein resides in the cell inner membrane. This Klebsiella pneumoniae (strain 342) protein is UPF0761 membrane protein KPK_5501.